Reading from the N-terminus, the 81-residue chain is Photosystem I iron-sulfur center (81 aa).

2 4Fe-4S ferredoxin-type domains span residues 2-31 (SHSVKIYDTCIGCTQCVRACPLDVLEMVPW) and 37-68 (GQIASSPRTEDCVGCKRCETACPTDFLSVRVY). 8 residues coordinate [4Fe-4S] cluster: cysteine 11, cysteine 14, cysteine 17, cysteine 21, cysteine 48, cysteine 51, cysteine 54, and cysteine 58.

In terms of assembly, the cyanobacterial PSI reaction center is composed of one copy each of PsaA,B,C,D,E,F,I,J,K,L,M and X, and forms trimeric complexes. The cofactor is [4Fe-4S] cluster.

It localises to the cellular thylakoid membrane. It carries out the reaction reduced [plastocyanin] + hnu + oxidized [2Fe-2S]-[ferredoxin] = oxidized [plastocyanin] + reduced [2Fe-2S]-[ferredoxin]. In terms of biological role, apoprotein for the two 4Fe-4S centers FA and FB of photosystem I (PSI); essential for photochemical activity. FB is the terminal electron acceptor of PSI, donating electrons to ferredoxin. The C-terminus interacts with PsaA/B/D and helps assemble the protein into the PSI complex. Required for binding of PsaD and PsaE to PSI. PSI is a plastocyanin/cytochrome c6-ferredoxin oxidoreductase, converting photonic excitation into a charge separation, which transfers an electron from the donor P700 chlorophyll pair to the spectroscopically characterized acceptors A0, A1, FX, FA and FB in turn. The sequence is that of Photosystem I iron-sulfur center from Prochlorococcus marinus (strain SARG / CCMP1375 / SS120).